The sequence spans 329 residues: UDP-N-acetylenolpyruvoylglucosamine reductase (329 aa).

One can recognise an FAD-binding PCMH-type domain in the interval 28-192 (RVGGPADLLC…ARVEVRLHAG (165 aa)). Arg172 is a catalytic residue. The interval 202–227 (REDRERRRATQPLDRPTFGSTFTNPP) is disordered. Ser221 functions as the Proton donor in the catalytic mechanism. Glu291 is an active-site residue. The interval 307–329 (DGHAAAGGGPGAASGGVRPPEAT) is disordered. The span at 311–320 (AAGGGPGAAS) shows a compositional bias: gly residues.

This sequence belongs to the MurB family. FAD serves as cofactor.

It localises to the cytoplasm. It carries out the reaction UDP-N-acetyl-alpha-D-muramate + NADP(+) = UDP-N-acetyl-3-O-(1-carboxyvinyl)-alpha-D-glucosamine + NADPH + H(+). Its pathway is cell wall biogenesis; peptidoglycan biosynthesis. Functionally, cell wall formation. The sequence is that of UDP-N-acetylenolpyruvoylglucosamine reductase from Anaeromyxobacter sp. (strain K).